Here is a 372-residue protein sequence, read N- to C-terminus: L-selectin (372 aa).

Positions 1–28 are cleaved as a signal peptide; that stretch reads MIFPRKCQSTQRDLWNIFKLWGWTMLCC. Residues 29 to 38 constitute a propeptide that is removed on maturation; sequence DFLAHHGTDC. Over 39-332 the chain is Extracellular; it reads WTYHYSENPM…FSMIKEGDYN (294 aa). The C-type lectin domain occupies 55–155; that stretch reads RFCRENYTDL…ACHKPKAALC (101 aa). 10 disulfides stabilise this stretch: cysteine 57/cysteine 155, cysteine 128/cysteine 147, cysteine 128/cysteine 160, cysteine 160/cysteine 171, cysteine 165/cysteine 180, cysteine 182/cysteine 191, cysteine 197/cysteine 241, cysteine 227/cysteine 254, cysteine 259/cysteine 303, and cysteine 289/cysteine 316. N-linked (GlcNAc...) asparagine glycans are attached at residues asparagine 60 and asparagine 104. Residues glutamate 118, asparagine 120, glutamate 126, asparagine 143, and aspartate 144 each contribute to the Ca(2+) site. The EGF-like domain maps to 156–192; sequence YTASCQPWSCSGHGECVEIINNYTCNCDVGYYGPQCQ. N-linked (GlcNAc...) asparagine glycosylation occurs at asparagine 177. Sushi domains follow at residues 195–256 and 257–318; these read IQCE…TCQV and IQCE…ICQK. 4 N-linked (GlcNAc...) asparagine glycosylation sites follow: asparagine 226, asparagine 232, asparagine 246, and asparagine 271. Residues 333–355 form a helical membrane-spanning segment; sequence PLFIPVAVMVTAFSGLAFIIWLA. Topologically, residues 356 to 372 are cytoplasmic; that stretch reads RRLKKGKKSKKSMDDPY.

The protein belongs to the selectin/LECAM family. Interaction with SELPLG/PSGL1 and PODXL2 is required for promoting recruitment and rolling of leukocytes. This interaction is dependent on the sialyl Lewis X glycan modification of SELPLG and PODXL2, and tyrosine sulfation modifications of SELPLG. Sulfation on 'Tyr-51' of SELPLG is important for L-selectin binding. In terms of processing, N-glycosylated.

The protein resides in the cell membrane. Its function is as follows. Calcium-dependent lectin that mediates cell adhesion by binding to glycoproteins on neighboring cells. Mediates the adherence of lymphocytes to endothelial cells of high endothelial venules in peripheral lymph nodes. Promotes initial tethering and rolling of leukocytes in endothelia. The sequence is that of L-selectin (SELL) from Macaca mulatta (Rhesus macaque).